The chain runs to 415 residues: Glutamate-1-semialdehyde 2,1-aminomutase (415 aa).

The residue at position 260 (lysine 260) is an N6-(pyridoxal phosphate)lysine.

Belongs to the class-III pyridoxal-phosphate-dependent aminotransferase family. HemL subfamily. It depends on pyridoxal 5'-phosphate as a cofactor.

Its subcellular location is the cytoplasm. The enzyme catalyses (S)-4-amino-5-oxopentanoate = 5-aminolevulinate. It participates in porphyrin-containing compound metabolism; protoporphyrin-IX biosynthesis; 5-aminolevulinate from L-glutamyl-tRNA(Glu): step 2/2. The protein is Glutamate-1-semialdehyde 2,1-aminomutase of Methanoculleus marisnigri (strain ATCC 35101 / DSM 1498 / JR1).